The sequence spans 213 residues: Major fimbrial subunit (213 aa).

An N-terminal signal peptide occupies residues 1–20; the sequence is MKKTLLGSLILLAFAGNVQA. Cysteine 41 and cysteine 81 are oxidised to a cystine.

It belongs to the fimbrial protein family.

The protein localises to the fimbrium. Functionally, mediates adherence to oropharyngeal epithelial cells. Helps the airway colonization process. The protein is Major fimbrial subunit (hifA) of Haemophilus influenzae.